The primary structure comprises 483 residues: Glutamyl-tRNA(Gln) amidotransferase subunit A (483 aa).

Active-site charge relay system residues include lysine 76 and serine 151. Serine 175 functions as the Acyl-ester intermediate in the catalytic mechanism.

This sequence belongs to the amidase family. GatA subfamily. In terms of assembly, heterotrimer of A, B and C subunits.

The enzyme catalyses L-glutamyl-tRNA(Gln) + L-glutamine + ATP + H2O = L-glutaminyl-tRNA(Gln) + L-glutamate + ADP + phosphate + H(+). Functionally, allows the formation of correctly charged Gln-tRNA(Gln) through the transamidation of misacylated Glu-tRNA(Gln) in organisms which lack glutaminyl-tRNA synthetase. The reaction takes place in the presence of glutamine and ATP through an activated gamma-phospho-Glu-tRNA(Gln). The protein is Glutamyl-tRNA(Gln) amidotransferase subunit A of Ectopseudomonas mendocina (strain ymp) (Pseudomonas mendocina).